Reading from the N-terminus, the 214-residue chain is tRNA (guanine-N(7)-)-methyltransferase (214 aa).

S-adenosyl-L-methionine contacts are provided by Glu43, Glu68, Asn99, and Asp121. Residue Asp121 is part of the active site. Residues Lys125, Asp157, and 194–197 (TEYE) contribute to the substrate site.

The protein belongs to the class I-like SAM-binding methyltransferase superfamily. TrmB family.

It carries out the reaction guanosine(46) in tRNA + S-adenosyl-L-methionine = N(7)-methylguanosine(46) in tRNA + S-adenosyl-L-homocysteine. It functions in the pathway tRNA modification; N(7)-methylguanine-tRNA biosynthesis. Catalyzes the formation of N(7)-methylguanine at position 46 (m7G46) in tRNA. In Alkaliphilus metalliredigens (strain QYMF), this protein is tRNA (guanine-N(7)-)-methyltransferase.